Here is a 1087-residue protein sequence, read N- to C-terminus: Exportin-7 (1087 aa).

At A2 the chain carries N-acetylalanine. One can recognise an Importin N-terminal domain in the interval 30 to 96; the sequence is AEKALVEFTN…RNYVLNYLAT (67 aa). S570 is modified (phosphoserine).

It belongs to the exportin family. In terms of assembly, binds to nucleoporins. Found in a complex with XPO7, EIF4A1, ARHGAP1, VPS26A, VPS29, VPS35 and SFN. Interacts with ARHGAP1 and SFN. Interacts with Ran and cargo proteins in a GTP-dependent manner.

Its subcellular location is the cytoplasm. It is found in the nucleus. The protein localises to the nuclear pore complex. Functionally, mediates the nuclear export of proteins (cargos) with broad substrate specificity. In the nucleus binds cooperatively to its cargo and to the GTPase Ran in its active GTP-bound form. Docking of this trimeric complex to the nuclear pore complex (NPC) is mediated through binding to nucleoporins. Upon transit of a nuclear export complex into the cytoplasm, disassembling of the complex and hydrolysis of Ran-GTP to Ran-GDP (induced by RANBP1 and RANGAP1, respectively) cause release of the cargo from the export receptor. XPO7 then return to the nuclear compartment and mediate another round of transport. The directionality of nuclear export is thought to be conferred by an asymmetric distribution of the GTP- and GDP-bound forms of Ran between the cytoplasm and nucleus. This is Exportin-7 (XPO7) from Pongo abelii (Sumatran orangutan).